A 432-amino-acid chain; its full sequence is Histidinol dehydrogenase (432 aa).

NAD(+) is bound by residues Tyr-130, Gln-191, and Asn-214. The substrate site is built by Ser-237, Gln-259, and His-262. Zn(2+)-binding residues include Gln-259 and His-262. Residues Glu-327 and His-328 each act as proton acceptor in the active site. The substrate site is built by His-328, Asp-361, Glu-415, and His-420. Asp-361 provides a ligand contact to Zn(2+). His-420 is a Zn(2+) binding site.

This sequence belongs to the histidinol dehydrogenase family. The cofactor is Zn(2+).

It carries out the reaction L-histidinol + 2 NAD(+) + H2O = L-histidine + 2 NADH + 3 H(+). Its pathway is amino-acid biosynthesis; L-histidine biosynthesis; L-histidine from 5-phospho-alpha-D-ribose 1-diphosphate: step 9/9. Its function is as follows. Catalyzes the sequential NAD-dependent oxidations of L-histidinol to L-histidinaldehyde and then to L-histidine. The protein is Histidinol dehydrogenase of Agrobacterium fabrum (strain C58 / ATCC 33970) (Agrobacterium tumefaciens (strain C58)).